The sequence spans 346 residues: Phosphoribosylformylglycinamidine cyclo-ligase (346 aa).

This sequence belongs to the AIR synthase family.

Its subcellular location is the cytoplasm. The enzyme catalyses 2-formamido-N(1)-(5-O-phospho-beta-D-ribosyl)acetamidine + ATP = 5-amino-1-(5-phospho-beta-D-ribosyl)imidazole + ADP + phosphate + H(+). It functions in the pathway purine metabolism; IMP biosynthesis via de novo pathway; 5-amino-1-(5-phospho-D-ribosyl)imidazole from N(2)-formyl-N(1)-(5-phospho-D-ribosyl)glycinamide: step 2/2. The sequence is that of Phosphoribosylformylglycinamidine cyclo-ligase from Colwellia psychrerythraea (strain 34H / ATCC BAA-681) (Vibrio psychroerythus).